The chain runs to 1111 residues: Lon protease homolog, mitochondrial (1111 aa).

The N-terminal 21 residues, 1-21 (MLRSSRSRLVTRNILLRQFKN), are a transit peptide targeting the mitochondrion. Disordered stretches follow at residues 85–177 (IQLK…AKQP) and 288–311 (PPTSEQNLKDESDVSKSEGVENNE). Residues 88 to 125 (KQDDKGKDIDQPESENRKKEEEQVPTEEKDNDTAKESE) are compositionally biased toward basic and acidic residues. Positions 126–135 (TSQQRDSVAE) are enriched in polar residues. The segment covering 145–167 (GASGNGESSGNGSGDDGNNGSGN) has biased composition (gly residues). A Lon N-terminal domain is found at 185–450 (VMALPISRRP…KALTVLKKEL (266 aa)). The span at 294–306 (NLKDESDVSKSEG) shows a compositional bias: basic and acidic residues. 602-609 (GPPGVGKT) is an ATP binding site. 2 stretches are compositionally biased toward basic and acidic residues: residues 819–835 (ENEEVKDQKDIKVKQSE) and 853–865 (ELIKTQKSHDNKG). Positions 819–866 (ENEEVKDQKDIKVKQSENKSSAEASTVESTTEENELIKTQKSHDNKGS) are disordered. Residues 899–1085 (STPPGVVMGL…EDVFQRLFGD (187 aa)) enclose the Lon proteolytic domain. Catalysis depends on residues S991 and K1034.

This sequence belongs to the peptidase S16 family. In terms of assembly, homohexamer or homoheptamer. Organized in a ring with a central cavity.

The protein resides in the mitochondrion matrix. The enzyme catalyses Hydrolysis of proteins in presence of ATP.. ATP-dependent serine protease that mediates the selective degradation of misfolded, unassembled or oxidatively damaged polypeptides as well as certain short-lived regulatory proteins in the mitochondrial matrix. May also have a chaperone function in the assembly of inner membrane protein complexes. Participates in the regulation of mitochondrial gene expression and in the maintenance of the integrity of the mitochondrial genome. Binds to mitochondrial DNA in a site-specific manner. The polypeptide is Lon protease homolog, mitochondrial (Kluyveromyces lactis (strain ATCC 8585 / CBS 2359 / DSM 70799 / NBRC 1267 / NRRL Y-1140 / WM37) (Yeast)).